The sequence spans 1411 residues: Tectonin beta-propeller repeat-containing protein 2 (1411 aa).

WD repeat units follow at residues 23–66 (IPTK…HLNQ), 67–114 (MRKY…PGRN), 115–161 (KQLR…LDQG), 162–203 (LCNS…EKSV), 204–265 (RQIG…AGGV), 266–309 (KPFE…EYSI), and 310–343 (YLLD…FFLK). Disordered regions lie at residues 379-439 (QAEK…GSQP), 463-542 (VKRK…QENT), 579-637 (RELL…GPQS), and 758-779 (YAHG…PSCS). The segment covering 400 to 420 (SSVASEPRSRSSSLNSTDSGS) has biased composition (low complexity). Composition is skewed to polar residues over residues 475 to 489 (GSRS…STPC), 496 to 542 (SPQS…QENT), 608 to 621 (PNST…QDSS), and 763 to 779 (PSSS…PSCS). TECPR repeat units lie at residues 945-976 (NVVW…KCDI), 994-1027 (QTLW…WQVS), 1179-1209 (DALW…TRLD), 1226-1259 (QHIW…IMIE), 1279-1310 (QMLW…EHVP), and 1322-1353 (RTVW…KKIP). The tract at residues 1388 to 1411 (HGTQKSSQAAMPHPEDLEDEWEVI) is disordered.

This sequence belongs to the WD repeat KIAA0329 family. As to quaternary structure, interacts with the ATG8 family members GABARAP, GABARAPL1, GABARAPL2, MAP1LC3B and MAP1LC3C. As to expression, detected in skin fibroblast (at protein level).

Functionally, probably plays a role as positive regulator of autophagy. The chain is Tectonin beta-propeller repeat-containing protein 2 (TECPR2) from Homo sapiens (Human).